Here is a 68-residue protein sequence, read N- to C-terminus: Copper transport protein ATOX1 (68 aa).

One can recognise an HMA domain in the interval 1 to 63 (MPKHEFSVDM…TLGKTGKAVS (63 aa)). Residues C12 and C15 each contribute to the Cu cation site. Position 47 is a phosphoserine (S47). At K60 the chain carries N6-acetyllysine.

Belongs to the ATX1 family. Homodimer. Interacts with ATP7B. Interacts with ATP7A. Interacts (via dimer form) with SLC31A1 (via C-terminal domain); this interaction improves ATOX1 stability and controls intracellular Cu(I) levels.

In terms of biological role, binds and deliver cytosolic copper to the copper ATPase proteins. May be important in cellular antioxidant defense. The polypeptide is Copper transport protein ATOX1 (Bos taurus (Bovine)).